We begin with the raw amino-acid sequence, 184 residues long: NADH-quinone oxidoreductase subunit B (184 aa).

The [4Fe-4S] cluster site is built by Cys-63, Cys-64, Cys-128, and Cys-158.

It belongs to the complex I 20 kDa subunit family. As to quaternary structure, NDH-1 is composed of 14 different subunits. Subunits NuoB, C, D, E, F, and G constitute the peripheral sector of the complex. [4Fe-4S] cluster is required as a cofactor.

The protein resides in the cell inner membrane. It catalyses the reaction a quinone + NADH + 5 H(+)(in) = a quinol + NAD(+) + 4 H(+)(out). In terms of biological role, NDH-1 shuttles electrons from NADH, via FMN and iron-sulfur (Fe-S) centers, to quinones in the respiratory chain. Couples the redox reaction to proton translocation (for every two electrons transferred, four hydrogen ions are translocated across the cytoplasmic membrane), and thus conserves the redox energy in a proton gradient. The polypeptide is NADH-quinone oxidoreductase subunit B (Xanthomonas campestris pv. campestris (strain 8004)).